An 834-amino-acid chain; its full sequence is Periplasmic nitrate reductase (834 aa).

Residues 1 to 29 (MNLTRREFAKANAAAIAAAAAGLPILVRA) constitute a signal peptide (tat-type signal). A 4Fe-4S Mo/W bis-MGD-type domain is found at 41 to 97 (LVWNKAPCRFCGTGCSVMVATRDGQVVATHGDIKAEVNRGINCVKGYFLSKIMYGSD). Positions 48, 51, 55, and 83 each coordinate [4Fe-4S] cluster. Mo-bis(molybdopterin guanine dinucleotide) contacts are provided by residues Lys85, Gln152, Asn177, Cys181, 214-221 (WGSNMAEM), 245-249 (STFEH), 264-266 (QTD), Met375, Gln379, Asn485, 511-512 (SD), Lys534, Asp561, and 721-730 (TGRVLEHWHT). A substrate-binding site is contributed by Phe797. Positions 805 and 822 each coordinate Mo-bis(molybdopterin guanine dinucleotide).

This sequence belongs to the prokaryotic molybdopterin-containing oxidoreductase family. NasA/NapA/NarB subfamily. In terms of assembly, component of the periplasmic nitrate reductase NapAB complex composed of NapA and NapB. Requires [4Fe-4S] cluster as cofactor. Mo-bis(molybdopterin guanine dinucleotide) serves as cofactor. Predicted to be exported by the Tat system. The position of the signal peptide cleavage has not been experimentally proven.

It is found in the periplasm. The enzyme catalyses 2 Fe(II)-[cytochrome] + nitrate + 2 H(+) = 2 Fe(III)-[cytochrome] + nitrite + H2O. Its function is as follows. Catalytic subunit of the periplasmic nitrate reductase complex NapAB. Receives electrons from NapB and catalyzes the reduction of nitrate to nitrite. In Pseudomonas aeruginosa (strain LESB58), this protein is Periplasmic nitrate reductase.